We begin with the raw amino-acid sequence, 90 residues long: Large ribosomal subunit protein bL27 (90 aa).

Belongs to the bacterial ribosomal protein bL27 family.

The chain is Large ribosomal subunit protein bL27 from Rhodopseudomonas palustris (strain BisB5).